The primary structure comprises 290 residues: ATP synthase gamma chain (290 aa).

The protein belongs to the ATPase gamma chain family. As to quaternary structure, F-type ATPases have 2 components, CF(1) - the catalytic core - and CF(0) - the membrane proton channel. CF(1) has five subunits: alpha(3), beta(3), gamma(1), delta(1), epsilon(1). CF(0) has three main subunits: a, b and c.

The protein localises to the cell inner membrane. In terms of biological role, produces ATP from ADP in the presence of a proton gradient across the membrane. The gamma chain is believed to be important in regulating ATPase activity and the flow of protons through the CF(0) complex. This Anaeromyxobacter sp. (strain Fw109-5) protein is ATP synthase gamma chain.